We begin with the raw amino-acid sequence, 281 residues long: Undecaprenyl-diphosphatase (281 aa).

8 helical membrane-spanning segments follow: residues 1–21, 45–65, 93–113, 125–145, 155–175, 195–215, 227–247, and 256–276; these read MNVL…FLPI, WTAF…IYFA, SKLG…GLVF, LIVI…SEVV, ISWL…VPGA, AARF…LLEF, FLVL…TIAF, and STNV…WMVF.

Belongs to the UppP family.

It localises to the cell inner membrane. It catalyses the reaction di-trans,octa-cis-undecaprenyl diphosphate + H2O = di-trans,octa-cis-undecaprenyl phosphate + phosphate + H(+). Its function is as follows. Catalyzes the dephosphorylation of undecaprenyl diphosphate (UPP). Confers resistance to bacitracin. This Syntrophobacter fumaroxidans (strain DSM 10017 / MPOB) protein is Undecaprenyl-diphosphatase.